Here is a 131-residue protein sequence, read N- to C-terminus: Profilin-1 (131 aa).

A disulfide bond links C13 and C115. The Involved in PIP2 interaction signature appears at 81–97; the sequence is AVIRGKKGSGGITVKKT. A Phosphothreonine modification is found at T111.

The protein belongs to the profilin family. As to quaternary structure, multimer. Occurs in many kinds of cells as a complex with monomeric actin in a 1:1 ratio. Post-translationally, phosphorylated by MAP kinases. As to expression, pollen specific.

The protein localises to the cytoplasm. It localises to the cytoskeleton. Binds to actin and affects the structure of the cytoskeleton. At high concentrations, profilin prevents the polymerization of actin, whereas it enhances it at low concentrations. By binding to PIP2, it inhibits the formation of IP3 and DG. This chain is Profilin-1 (PRO1), found in Zea mays (Maize).